A 233-amino-acid chain; its full sequence is MNTPAQLSLPLYLPDDETFASFWPGDNSSLLAALQNVLRQEHSGYIYLWAREGAGRSHLLHAACAELSQRGDAVGYVPLDKRTWFVPEVLDGMEQLSLVCIDNIECIAGDELWEMAIFDLYNRILESGKTRLLITGDRPPRQLNLGLPDLASRLDWGQIYKLQPLSDEDKLQALQLRARLRGFELPEDVGRFLLKRLDREMRTLFMTLDQLDRASITAQRKLTIPFVKEILKL.

It belongs to the DnaA family. HdA subfamily. The active form seems to be an ADP-bound monomer. Forms the RIDA complex (regulatory inactivation of DnaA) of ATP-DnaA, ADP-Hda and the DNA-loaded beta sliding clamp (dnaN).

In terms of biological role, mediates the interaction of DNA replication initiator protein DnaA with DNA polymerase subunit beta sliding clamp (dnaN). Stimulates hydrolysis of ATP-DnaA to ADP-DnaA, rendering DnaA inactive for reinitiation, a process called regulatory inhibition of DnaA or RIDA. The polypeptide is DnaA regulatory inactivator Hda (Escherichia fergusonii (strain ATCC 35469 / DSM 13698 / CCUG 18766 / IAM 14443 / JCM 21226 / LMG 7866 / NBRC 102419 / NCTC 12128 / CDC 0568-73)).